Reading from the N-terminus, the 249-residue chain is 3-deoxy-D-manno-octulosonic acid kinase (249 aa).

The active site involves D175.

The protein belongs to the protein kinase superfamily. KdkA/RfaP family.

The protein resides in the cell inner membrane. It catalyses the reaction an alpha-Kdo-(2-&gt;6)-lipid IVA + ATP = a 4-O-phospho-alpha-Kdo-(2-&gt;6)-lipid IVA + ADP + H(+). Its pathway is bacterial outer membrane biogenesis; LPS core biosynthesis. In terms of biological role, catalyzes the ATP-dependent phosphorylation of the 3-deoxy-D-manno-octulosonic acid (Kdo) residue in Kdo-lipid IV(A) at the 4-OH position. The polypeptide is 3-deoxy-D-manno-octulosonic acid kinase (Xylella fastidiosa (strain M12)).